A 365-amino-acid chain; its full sequence is DNA replication and repair protein RecF (365 aa).

Gly30–Thr37 contributes to the ATP binding site.

This sequence belongs to the RecF family.

It is found in the cytoplasm. Its function is as follows. The RecF protein is involved in DNA metabolism; it is required for DNA replication and normal SOS inducibility. RecF binds preferentially to single-stranded, linear DNA. It also seems to bind ATP. The sequence is that of DNA replication and repair protein RecF from Shewanella woodyi (strain ATCC 51908 / MS32).